The chain runs to 436 residues: UPF0761 membrane protein Bxeno_A3061 (436 aa).

A run of 6 helical transmembrane segments spans residues L42 to F62, G96 to V116, I136 to I156, A180 to L200, A210 to Y230, and V241 to I261.

Belongs to the UPF0761 family.

Its subcellular location is the cell inner membrane. This is UPF0761 membrane protein Bxeno_A3061 from Paraburkholderia xenovorans (strain LB400).